A 372-amino-acid polypeptide reads, in one-letter code: UDP-2-acetamido-2,6-beta-L-arabino-hexul-4-ose reductase (372 aa).

Residues 7–30 (GANGFVGRNLCAHLAERGGIEVVP), Leu53, Tyr103, and Lys107 contribute to the NAD(+) site. Tyr103 functions as the Proton acceptor in the catalytic mechanism. Substrate-binding positions include Asn132 and 279 to 282 (HPGV).

It belongs to the NAD(P)-dependent epimerase/dehydratase family. Homodimer.

The catalysed reaction is UDP-2-acetamido-2,6-dideoxy-beta-L-arabino-hex-4-ulose + NADH + H(+) = UDP-2-acetamido-2,6-dideoxy-beta-L-talose + NAD(+). The enzyme catalyses UDP-2-acetamido-2,6-dideoxy-beta-L-arabino-hex-4-ulose + NADPH + H(+) = UDP-2-acetamido-2,6-dideoxy-beta-L-talose + NADP(+). It functions in the pathway bacterial outer membrane biogenesis; LPS O-antigen biosynthesis. In terms of biological role, bifunctional enzyme that mediates C-3 epimerization of the second intermediate followed by reduction at C-4 during serogroup O11 O-antigen biosynthesis, thus catalyzing the conversion of UDP-N-acetyl-D-glucosamine to precursors for the biosynthesis of O antigen. This chain is UDP-2-acetamido-2,6-beta-L-arabino-hexul-4-ose reductase, found in Pseudomonas aeruginosa (strain ATCC 29260 / BCRC 12902 / CIP 102967 / NCIMB 11965 / PA103).